The chain runs to 810 residues: RING finger protein unkempt homolog (810 aa).

The interval 1–24 is disordered; the sequence is MSKGPGPGGSAASSAPPAATAQVL. Over residues 10 to 19 the composition is skewed to low complexity; that stretch reads SAASSAPPAA. 5 C3H1-type zinc fingers span residues 84–113, 124–154, 215–241, 251–285, and 293–321; these read YSPD…HRTT, YYKT…HGPH, NYKT…HNSK, KYRS…HTRT, and IYKS…HVEQ. Residues 239 to 265 are disordered; the sequence is NSKDRRRSPRKHKYRSSPCPNVKHGDE. Ser-240 is modified (phosphoserine). The segment covering 241 to 253 has biased composition (basic residues); the sequence is KDRRRSPRKHKYR. The interval 324 to 343 is disordered; the sequence is LSDDLQPSSTVSSPTQPGPV. Residues 329–343 are compositionally biased toward low complexity; that stretch reads QPSSTVSSPTQPGPV. 3 positions are modified to phosphoserine: Ser-374, Ser-378, and Ser-385. The segment covering 569-585 has biased composition (low complexity); that stretch reads SASFHSASPSPPVSLSS. A disordered region spans residues 569–602; the sequence is SASFHSASPSPPVSLSSHFLQQPQGHLSQSENTF. The segment covering 586-602 has biased composition (polar residues); it reads HFLQQPQGHLSQSENTF. The residue at position 631 (Ser-631) is a Phosphoserine. Residues 643–723 are a coiled coil; the sequence is GAAELARLRQ…QEELERLHSG (81 aa). The RING-type; degenerate zinc finger occupies 766–801; it reads SVKCLKCQEQNRAVLPCQHAVLCELCAEGSECPVCQ.

The protein belongs to the unkempt family.

The protein resides in the cytoplasm. Functionally, sequence-specific RNA-binding protein which plays an important role in the establishment and maintenance of the early morphology of cortical neurons during embryonic development. Acts as a translation repressor and controls a translationally regulated cell morphology program to ensure proper structuring of the nervous system. Translational control depends on recognition of its binding element within target mRNAs which consists of a mandatory UAG trimer upstream of a U/A-rich motif. Associated with polysomes. The polypeptide is RING finger protein unkempt homolog (UNK) (Canis lupus familiaris (Dog)).